A 602-amino-acid polypeptide reads, in one-letter code: uncharacterized protein (602 aa).

Residues 51 to 210 (QYLGTQPRDF…PFVSYQPDAD (160 aa)) form the Helicase ATP-binding domain. Basic and acidic residues predominate over residues 430–439 (PHRESAHDPL). Disordered stretches follow at residues 430-452 (PHRE…TERG) and 518-538 (RAQL…ASVH). Polar residues predominate over residues 523 to 534 (KGATQPATSGAS).

To M.leprae ML1624.

This is an uncharacterized protein from Mycobacterium tuberculosis (strain ATCC 25618 / H37Rv).